Consider the following 2633-residue polypeptide: MAASSTRTLLMFGPGAMSLNETYFASILSFISTDSASQWALSAVRDIESHWPSLCEAIPKLQHTSGVSNAQKLAEWLRTGTLAPGSTIASLPNAILGPLVVIAQLVEYLRHVDSLSESGLRGGEGFQVPSAPDAETVGCCLGTFSALVVSSSSSWAQFCHNASAVVRIVFVLGALSDAQDATDASGPSVSLIAFWRGGQSLSDLKKALEKFPEAYISVLYDENRVTVTTSTRTVAALKNHLQTVGITTNETEFHGRFHAAQLYQTELEAFLAYCRRFPTFQLPDSSCIVVPTRVNSENVVTSQESLLEISCRAFLVSQFDWIKTFRAAVSSTLQNRASRIIEFGPERCVPPTLLRRLNSQVTHFDFEESIKRAKASLSHDQELPAGVAENDIAVIGMACKVAGADDVNEYWELLLQGKSQHRELIPNDRFVMETPFRPFEAGDDKKKWFGNFIGDHDAFDYKFFKKSPREALHMDPQQRLMLQAAYQAVAQSGYYNANLNVHGPTKVGCYIGVVANDYENNISHTTPIAFSATGALRSYIAGKVSHFFGWTGPAMTVDTACSASTVALDLACKAILSGECSAALVGGTNFFSTPMFFQNLAAGSFLSTTGQCKPFDAKADGYCRGEAVGTVFLKKLSQAIADGDQVLGVISATAINQNRNETPIFVPNSPSLTNVFRTAIEKSGLDAKDISVVEAHGTGTPVGDPVEYDSIRQVFGGAVRAGQDALQVGSVKGLVGHTEGASGVVALVKILLMLQRGQIPPQASFETINPSIKYSPSDNLEITKTPLPWNQEFKAALINNYGAAGSNASVIIKQGPAQLLRRLPPVVDSETEALLSKVGADDAQKAPFFISGLDEKAILAYAQKLRQFIYSHSNLDIQDLAFSVNRQSNWSLGRGAVFSAGSIAELDEKLASIETFPVPSSQPPVILCFGGQVSTFVGLDYQLFAKSAILRRHLDQCDAACKSIGAGSIYPRIFQSDPIDDPSVLQPLLFSLQYSCAMSWIDCGIVPAKLVGHSFGELTALCISGVVSLQDGLKLVYGRSKIIKESWGAERGAMLAVEADLEELESLLTTVNSSLQEGRATIACFNGPRSFTVAGSSAAIDAVQQAISNTQPVLKHKRLNVTNAFHSVLVERLKPDLEALGRQLTFALPQIPLERATRSREDHGLSPSYVANHMREPVYFHHAVERIAKEYPEAIWLEAGSNSTITTMASKALGLPKASTFQPVNVTNNSKASSQLSDVTMNLWKAGLRITFWPHSRAQTYEYKHIILPPYQFEKHRQWLEFKPPQALQVVVQTDSSTDARNGTTEPQPVGLYTLLDRGQDKYRFRVNTAAGQFVDAMSDHAIGKAQTLPAMFGVDLAIEALLSIHPELGDTSRFDPQIYNVVNQEYIHDSSRALFVLFERLGQDENSWAFELTSKGKDGAESLHMSGQLHFQASDDARSRLEFSRLDRFITHDRCLQVLESSGRSDEVIQGQTIYSVLSSSDVNYGQRLRGLQRLVGRSNESAGRLVRRRSGKLFVDFALGEVFTQVGSIWANCMAQHQRNTRNKGIYMATGLEQWSKSPKVLQKFNQGLYDNDPEIEWHVLAQHKRNTSDDSFTTDIFVFDAASGDLEEVILGIKYAPVSLDQLFSGSAIATATTPVANGYVPLTTPFVPVPTTTKQAAVPQPQHVAKKAAPRAAPKRDIKEELWLRLRPVLADISGLEPEEIQPTDALADIGIDSLMGMEMAREVETTFNCTVEQSELLSIVDVPGILKFLQSTLGDEDVHDSSETMSTVSSDGNVHSPPTSGSEMASPNLKVSYGSAYGSSDLPISAVLEAFGESSAKTDQFLKTYGCAGYLDGVSQKQTRLCLVLTSAAFKQLGCDLEAAKPGEVLQPVPFVERHRRFHQYLYSMLEETRIINIDGDVITRTAIPLPSQSADAILQDLMRRHADNGSSHQLAYNVGSRMADVLSGKADGPQLIFGDAKNRELVANFYGELPFNKLYFELMADFLTRLANKLKLSSSRSGTPTLKILEMGAGTGGTTKVLLPILAKLGIPLEYTFTDLSPSLVAQAKRRFKEYPFMKFAVHDIEQPPSDPELVGSQHVVIASNAVHATHSLRDSARNIHKFLRPDGFLMLLEMMRTLHWVDVVWGTLEGWWLFDDGRTHAIVNEQRWEKELLASGFKHVRWTDGKLPEVHVQRVIIALAGDGDGDVSDIPALTSPALKDEEDHGSKLDGEERKRVANAYVESTIRDFAIPSYTGPILSTAPGAGACVLVTGATGSLGSHLVAHIAGLPSVDTIYCLNRPRPGKKGQEDQSRDPLSRLTEVLASKSIQLSEAEISKLRVIETDLPLPQFGLDEIQYEQLLNNVTHIVHSAFPVNGLRSLKQNEPQFTLMRNLVDLAAGVSARRPTEFKFTFQFISSLSAVGMYPKVHGEKRVPEQQWDVDSALPNGYGEAKVICERVLLETLGQHPDRFRAMTVRLGQLSGSMKTGYWNHMEMLSFLFKSAQTLRALPDVDGDVSWLHLEDASASLADLLLRDAPTCHAVYHLDNPRPRDWKDVIPVLADALDIPSSHIVPFEEWLRRVRAYPGEDPWDNPSAKAMDFFEHKFKHMSCGGVTMATDHALEHSETLRAVQPVSDELVRKYIQAWKDSGFLR.

Positions 67 to 237 (VSNAQKLAEW…TTSTRTVAAL (171 aa)) are N-terminal acylcarrier protein transacylase domain (SAT). Residue cysteine 140 is the Nucleophile; for transacylase activity of the active site. Catalysis depends on histidine 258, which acts as the Proton donor/acceptor; for transacylase activity. In terms of domain architecture, Ketosynthase family 3 (KS3) spans 389–814 (ENDIAVIGMA…GSNASVIIKQ (426 aa)). Active-site for beta-ketoacyl synthase activity residues include cysteine 561, histidine 696, and histidine 737. The tract at residues 928 to 1239 (CFGGQVSTFV…SKASSQLSDV (312 aa)) is malonyl-CoA:ACP transacylase (MAT) domain. The interval 1307–1437 (PQPVGLYTLL…GQLHFQASDD (131 aa)) is N-terminal hotdog fold. A PKS/mFAS DH domain is found at 1307–1627 (PQPVGLYTLL…YAPVSLDQLF (321 aa)). A product template (PT) domain region spans residues 1338 to 1509 (MSDHAIGKAQ…SNESAGRLVR (172 aa)). The segment at 1464-1627 (GRSDEVIQGQ…YAPVSLDQLF (164 aa)) is C-terminal hotdog fold. A Carrier domain is found at 1684–1758 (EELWLRLRPV…GILKFLQSTL (75 aa)). Serine 1718 is subject to O-(pantetheine 4'-phosphoryl)serine. The tract at residues 1762-1792 (DVHDSSETMSTVSSDGNVHSPPTSGSEMASP) is disordered. The span at 1768–1790 (ETMSTVSSDGNVHSPPTSGSEMA) shows a compositional bias: polar residues. The interval 1982–2166 (FELMADFLTR…ASGFKHVRWT (185 aa)) is methyltransferase domain. An NADPH-binding (R) domain region spans residues 2253–2495 (VTGATGSLGS…TLRALPDVDG (243 aa)).

The cofactor is pantetheine 4'-phosphate.

Its pathway is secondary metabolite biosynthesis. Its function is as follows. Non-reducing polyketide synthase; part of the SOR gene cluster that mediates the biosynthesis of sorbicillinoids, a diverse group of yellow secondary metabolites that restrict growth of competing pathogenic fungi but not of bacteria. Sorbicillinoids biosynthesis requires the action of two PKSs. The SOR cluster is required for the production of trichodimerol and dihydrotrichotetronin, with sor2 being sufficient for production of trichodimerol, but not dihydrotrichotetronin in the light. Sor1 iteratively combines three acetyl units and the growing chain is modified by the ketoacyl reductase subunit, and optional by the enoyl reductase subunit in the second cycle. The polyketide is then handed over to the PKS sor2, which adds three more acetyl units, and two methyl groups. Sor2 releases an aldehyde, which undergoes spontaneous cyclization resulting in the formation of sorbicillin or 2',3'-dihydrosorbicillin. The monooxygenase sor5 oxidizes sorbicillin and 2',3'-dihydrosorbicillin to 2',3'-dihydrosorbicillinol and sorbicillinol, respectively. The oxidoreductase sor8 further converts sorbicillinol into oxosorbicillinol. Sorbicillinol is the building block for the other sorbicillinoids such as disorbicillinol, bisvertinolon, dihydrobisvertinolone, and dihydrotrichotetronine. This chain is Non-reducing polyketide synthase sor2, found in Hypocrea jecorina (strain QM6a) (Trichoderma reesei).